A 282-amino-acid polypeptide reads, in one-letter code: Heat stress transcription factor A-7b (282 aa).

Low complexity-rich tracts occupy residues 1–11 (MDPSSSSRARS) and 120–134 (SSSSPPSLNYSQSQP). Disordered stretches follow at residues 1–24 (MDPSSSSRARSMPPPVPMEGLQEA) and 117–139 (RRTSSSSPPSLNYSQSQPEAHDP). The DNA-binding element occupies 26–120 (PSPFLTKTFE…LLKSIKRRTS (95 aa)). The tract at residues 137 to 196 (HDPGVELPQLREERHVLMMEISTLRQEEQRARGYVQAMEQRINGAEKKQRHMMSFLRRAV) is hydrophobic repeat HR-A/B. Positions 208–212 (QKRDR) match the Nuclear localization signal motif. The short motif at 232–240 (LSELEALAL) is the Nuclear export signal element. Positions 259-268 (DGFWEELLMN) match the AHA motif.

It belongs to the HSF family. Class A subfamily. In terms of assembly, homotrimer. In terms of processing, exhibits temperature-dependent phosphorylation.

It is found in the cytoplasm. Its subcellular location is the nucleus. Its function is as follows. Transcriptional activator that specifically binds DNA sequence 5'-AGAAnnTTCT-3' known as heat shock promoter elements (HSE). The protein is Heat stress transcription factor A-7b (HSFA7B) of Arabidopsis thaliana (Mouse-ear cress).